Consider the following 213-residue polypeptide: Thymidylate kinase (213 aa).

G10 to T17 serves as a coordination point for ATP.

Belongs to the thymidylate kinase family.

It catalyses the reaction dTMP + ATP = dTDP + ADP. Its function is as follows. Phosphorylation of dTMP to form dTDP in both de novo and salvage pathways of dTTP synthesis. This chain is Thymidylate kinase, found in Escherichia coli O81 (strain ED1a).